We begin with the raw amino-acid sequence, 75 residues long: Putative defensin-like protein 126 (75 aa).

An N-terminal signal peptide occupies residues 1–24; that stretch reads MSKSTFLFVYIILILGSMVNEIQG. Cystine bridges form between cysteine 29-cysteine 73, cysteine 38-cysteine 57, cysteine 43-cysteine 67, and cysteine 47-cysteine 69.

This sequence belongs to the DEFL family.

The protein localises to the secreted. The polypeptide is Putative defensin-like protein 126 (LCR6) (Arabidopsis thaliana (Mouse-ear cress)).